We begin with the raw amino-acid sequence, 349 residues long: Short chain dehydrogenase/reductase dpfgH (349 aa).

The helical transmembrane segment at 9–31 (LCIRVVDSLYGSFLYLPLAILFL) threads the bilayer. NADP(+) contacts are provided by isoleucine 65, arginine 89, and aspartate 115. An N-linked (GlcNAc...) asparagine glycan is attached at asparagine 118. Positions 142 and 164 each coordinate NADP(+). Catalysis depends on proton donor residues serine 191 and serine 192. NADP(+) contacts are provided by tyrosine 223 and lysine 227. Tyrosine 223 functions as the Proton acceptor in the catalytic mechanism. Lysine 227 functions as the Lowers pKa of active site Tyr in the catalytic mechanism. Asparagine 334 carries N-linked (GlcNAc...) asparagine glycosylation.

Belongs to the short-chain dehydrogenases/reductases (SDR) family.

It is found in the membrane. It functions in the pathway secondary metabolite biosynthesis; terpenoid biosynthesis. In terms of biological role, short chain dehydrogenase/reductase; part of the gene cluster that mediates the biosynthesis of diterpenoid pyrones. The first step of the pathway is the synthesis of the alpha-pyrone moiety by the polyketide synthase dpfgA via condensation of one acetyl-CoA starter unit with 3 malonyl-CoA units and 2 methylations. The alpha-pyrone is then combined with geranylgeranyl pyrophosphate (GGPP) formed by the GGPP synthase dpfgD through the action of the prenyltransferase dpfgC to yield a linear alpha-pyrone diterpenoid. Subsequent steps in the diterpenoid pyrone biosynthetic pathway involve the decalin core formation, which is initiated by the epoxidation of the C10-C11 olefin by the FAD-dependent oxidoreductase dpfgE, and is followed by a cyclization cascade catalyzed by the terpene cyclase dpfgB. The short chain dehydrogenase/reductase dpfgG then oxidizes the 8S hydroxy group to a ketone and the short chain dehydrogenase/reductase dpfgH reduces the ketone to the 8R hydroxy group to yield higginsianin B. Higginsianin B is further methylated by the methyltransferase dpfgI to produce the intermediate named FDDP B. The cytochrome P450 monooxygenase dfgpJ then catalyzes a three-step oxidation at C-27 to generate a carboxylic acid as well as C-26 hydroxylation. Finally, methyltransferase dpfgK methylates the carboxylic acid generated by dpfgJ, yielding the final diterpenoid pyrones from the pathway which were named FDDP D and FDDP E. This is Short chain dehydrogenase/reductase dpfgH from Gibberella zeae (strain ATCC MYA-4620 / CBS 123657 / FGSC 9075 / NRRL 31084 / PH-1) (Wheat head blight fungus).